A 295-amino-acid chain; its full sequence is Putative fused nickel transport protein NikMN (295 aa).

A run of 8 helical transmembrane segments spans residues Leu-8 to Ile-28, Leu-39 to Gly-59, Leu-70 to Ile-90, Gly-98 to Gly-118, Phe-135 to Ile-155, Ala-175 to Ala-195, Leu-211 to Val-231, and Ala-268 to Leu-288.

It belongs to the CbiM family. NikM subfamily.

The protein localises to the cell membrane. Its function is as follows. May be involved in nickel transport. In Archaeoglobus fulgidus (strain ATCC 49558 / DSM 4304 / JCM 9628 / NBRC 100126 / VC-16), this protein is Putative fused nickel transport protein NikMN.